A 466-amino-acid chain; its full sequence is Cysteine--tRNA ligase (466 aa).

C27 contacts Zn(2+). Positions 29–39 (PTVYDLAHIGN) match the 'HIGH' region motif. Zn(2+) is bound by residues C211, H236, and E240. The short motif at 270-274 (KMSKS) is the 'KMSKS' region element. K273 serves as a coordination point for ATP.

Belongs to the class-I aminoacyl-tRNA synthetase family. Monomer. It depends on Zn(2+) as a cofactor.

The protein localises to the cytoplasm. It catalyses the reaction tRNA(Cys) + L-cysteine + ATP = L-cysteinyl-tRNA(Cys) + AMP + diphosphate. The protein is Cysteine--tRNA ligase of Anaplasma marginale (strain St. Maries).